Consider the following 244-residue polypeptide: Small ribosomal subunit protein uS3 (244 aa).

The 72-residue stretch at 39 to 110 (IRNFIQKKYS…QVRINVVEVE (72 aa)) folds into the KH type-2 domain. Residues 221–244 (GAIPRRKGSRKPQQFEDRSSNENS) are disordered. Residues 233–244 (QQFEDRSSNENS) are compositionally biased toward basic and acidic residues.

This sequence belongs to the universal ribosomal protein uS3 family. In terms of assembly, part of the 30S ribosomal subunit. Forms a tight complex with proteins S10 and S14.

Functionally, binds the lower part of the 30S subunit head. Binds mRNA in the 70S ribosome, positioning it for translation. This chain is Small ribosomal subunit protein uS3, found in Prochlorococcus marinus (strain MIT 9515).